The sequence spans 204 residues: N-(5'-phosphoribosyl)anthranilate isomerase (204 aa).

This sequence belongs to the TrpF family.

It carries out the reaction N-(5-phospho-beta-D-ribosyl)anthranilate = 1-(2-carboxyphenylamino)-1-deoxy-D-ribulose 5-phosphate. It participates in amino-acid biosynthesis; L-tryptophan biosynthesis; L-tryptophan from chorismate: step 3/5. In Bacillus cereus (strain AH187), this protein is N-(5'-phosphoribosyl)anthranilate isomerase.